Reading from the N-terminus, the 629-residue chain is G1-specific transcription factors activator MSA1 (629 aa).

Residues 1-11 show a composition bias toward basic residues; the sequence is MDKSMIKKRGR. Disordered stretches follow at residues 1-60, 83-106, 217-286, 455-485, and 586-629; these read MDKS…KRRL, STPT…NDSY, YCDT…SSLQ, VQVQ…NMNS, and PNLH…IDDQ. Residues 21-37 show a composition bias toward polar residues; sequence PLQSPMAHSSMQVQKQG. A compositionally biased stretch (polar residues) spans 245 to 260; it reads IETSASPIGSARNNNI. 2 stretches are compositionally biased toward low complexity: residues 261 to 277 and 455 to 475; these read LLSQ…QLKP and VQVQ…RQFQ. Serine 268 bears the Phosphoserine mark. A compositionally biased stretch (basic and acidic residues) spans 614–629; the sequence is KQDDARTALKRLIDDQ.

Interacts with transcription complexes SCB-binding factor (SBF) and MCB-binding factor (MBF) at their target promoters. Interacts with MBP1 and SWI6. In terms of processing, phosphorylated by CDC28.

In terms of biological role, activator of G1-specific transcription factors, MBF and SBF. Promotes both the timing of G1-specific gene transcription and cell cycle initiation. Associates with SBF- and MBF-regulated target promoters and this binding is maximal during the G1 phase, prior to maximum budding. Affects cell cycle initiation by advancing the timing of transcription of G1-specific genes. Overexpression advances the timing of SBF-dependent transcription and budding. Depletion delays both indicators of cell cycle initiation. The chain is G1-specific transcription factors activator MSA1 (MSA1) from Saccharomyces cerevisiae (strain ATCC 204508 / S288c) (Baker's yeast).